The chain runs to 156 residues: Putative pre-16S rRNA nuclease (156 aa).

The protein belongs to the YqgF nuclease family.

It is found in the cytoplasm. In terms of biological role, could be a nuclease involved in processing of the 5'-end of pre-16S rRNA. This is Putative pre-16S rRNA nuclease from Ehrlichia ruminantium (strain Gardel).